Consider the following 364-residue polypeptide: Palmitoyltransferase ZDHHC9 (364 aa).

The Cytoplasmic portion of the chain corresponds to 1 to 35 (MSVMVVRKKVTRKWEKLPGRNTFCCDGRVMMARQK). The chain crosses the membrane as a helical span at residues 36-56 (GIFYLTLFLILGTCTLFFAFE). Over 57–63 (CRYLAVQ) the chain is Lumenal. Residues 64–84 (LSPAIPVFAAMLFLFSMATLL) traverse the membrane as a helical segment. Topologically, residues 85-183 (RTSFSDPGVI…NCVGKRNYRY (99 aa)) are cytoplasmic. The 51-residue stretch at 139 to 189 (KYCYTCKIFRPPRASHCSICDNCVERFDHHCPWVGNCVGKRNYRYFYLFIL) folds into the DHHC domain. Cys169 serves as the catalytic S-palmitoyl cysteine intermediate. Residues 184 to 204 (FYLFILSLSLLTIYVFAFNIV) form a helical membrane-spanning segment. The Lumenal portion of the chain corresponds to 205-228 (YVALKSLKIGFLETLKETPGTVLE). Residues 229–249 (VLICFFTLWSVVGLTGFHTFL) form a helical membrane-spanning segment. Over 250–364 (VALNQTTNED…PPQEAAEAEK (115 aa)) the chain is Cytoplasmic. The interval 303 to 364 (PLEESGSRPP…PPQEAAEAEK (62 aa)) is disordered. Residues 310–323 (RPPSTQETSSSLLP) are compositionally biased toward polar residues. The span at 346–356 (EMPPPEPPEPP) shows a compositional bias: pro residues.

The protein belongs to the DHHC palmitoyltransferase family. ERF2/ZDHHC9 subfamily. Interacts with GOLGA7. As to expression, highly expressed in kidney, skeletal muscle, brain, lung and liver. Absent in thymus, spleen and leukocytes.

It is found in the endoplasmic reticulum membrane. The protein resides in the golgi apparatus membrane. The enzyme catalyses L-cysteinyl-[protein] + hexadecanoyl-CoA = S-hexadecanoyl-L-cysteinyl-[protein] + CoA. Its function is as follows. Palmitoyltransferase that catalyzes the addition of palmitate onto various protein substrates, such as ADRB2, GSDMD, HRAS, NRAS and CGAS. The ZDHHC9-GOLGA7 complex is a palmitoyltransferase specific for HRAS and NRAS. May have a palmitoyltransferase activity toward the beta-2 adrenergic receptor/ADRB2 and therefore regulate G protein-coupled receptor signaling. Acts as a regulator of innate immunity by catalyzing palmitoylation of CGAS, thereby promoting CGAS homodimerization and cyclic GMP-AMP synthase activity. Activates pyroptosis by catalyzing palmitoylation of gasdermin-D (GSDMD), thereby promoting membrane translocation and pore formation of GSDMD. In terms of biological role, (Microbial infection) Through a sequential action with ZDHHC20, rapidly and efficiently palmitoylates SARS coronavirus-2/SARS-CoV-2 spike protein following its synthesis in the endoplasmic reticulum (ER). In the infected cell, promotes spike biogenesis by protecting it from premature ER degradation, increases half-life and controls the lipid organization of its immediate membrane environment. Once the virus has formed, spike palmitoylation controls fusion with the target cell. The protein is Palmitoyltransferase ZDHHC9 of Homo sapiens (Human).